The primary structure comprises 531 residues: Cation transporter HKT1;3 (531 aa).

Topologically, residues 1–46 (MNHCLVVSHKKLQTFRTFAASKFSSFTKSAQKSIKYSFQFIYQNNP) are cytoplasmic. A run of 2 helical transmembrane segments spans residues 47–67 (LFVH…SLKV) and 108–128 (LWVL…MLGI). Residues 129 to 190 (HFMRAEFGTK…GGHVEPKTIK (62 aa)) lie on the Cytoplasmic side of the membrane. 2 helical membrane passes run 191–211 (FLGF…SLLI) and 264–284 (ILLL…APCL). The Cytoplasmic segment spans residues 285-321 (RLMVWSLEKITGKKDCRYILEYPKAIGYKHLMSTRES). The next 2 membrane-spanning stretches (helical) occupy residues 322–342 (VYLT…FLSL) and 383–403 (SAIL…SFLP). The Cytoplasmic portion of the chain corresponds to 404-421 (RHDGEDSKTEKINKRKGL). 2 helical membrane-spanning segments follow: residues 422-442 (LENW…LICI) and 494-514 (YGFA…VMLF). The Cytoplasmic segment spans residues 515–530 (GRLKTFNMKGGRAWKL).

It belongs to the TrkH potassium transport family. HKT (TC 2.A.38.3) subfamily. As to quaternary structure, interacts with CNIH1. In terms of tissue distribution, weakly expressed. In roots, expressed in epidermis, exodermis, cortex, and sieve elements and companion cells of phloem. In mature leaves, expressed in large highly vacuolated cells of the adaxial epidermis, phloem and xylem.

It is found in the endoplasmic reticulum membrane. The protein resides in the golgi apparatus membrane. It carries out the reaction Na(+)(in) = Na(+)(out). Functionally, functions as a highly-selective sodium transporter. Does not seem to function as sodium-potassium cotransporter. May be involved in turgor changes for rolling and unrolling of leaves in response to environmental variations. The polypeptide is Cation transporter HKT1;3 (Oryza sativa subsp. japonica (Rice)).